We begin with the raw amino-acid sequence, 258 residues long: Glycerol-3-phosphate acyltransferase (258 aa).

A run of 6 helical transmembrane segments spans residues 11–31 (IILA…IIIV), 62–82 (LVVA…AILL), 94–114 (SYFI…YYKF), 124–144 (LGLL…IWFI), 160–180 (ALII…YFIW), and 212–232 (WASG…ILAW).

The protein belongs to the PlsY family. Probably interacts with PlsX.

The protein localises to the cell membrane. The enzyme catalyses an acyl phosphate + sn-glycerol 3-phosphate = a 1-acyl-sn-glycero-3-phosphate + phosphate. It participates in lipid metabolism; phospholipid metabolism. Catalyzes the transfer of an acyl group from acyl-phosphate (acyl-PO(4)) to glycerol-3-phosphate (G3P) to form lysophosphatidic acid (LPA). This enzyme utilizes acyl-phosphate as fatty acyl donor, but not acyl-CoA or acyl-ACP. The polypeptide is Glycerol-3-phosphate acyltransferase (Mycoplasma mycoides subsp. mycoides SC (strain CCUG 32753 / NCTC 10114 / PG1)).